The chain runs to 287 residues: RxLR effector protein Avr4 (287 aa).

The N-terminal stretch at 1–24 is a signal peptide; the sequence is MRSLHILLVFTASLLASLTESAKA. The RxLR-dEER signature appears at 42-55; the sequence is RFLRAQTDEKNEER. A W1 motif region spans residues 115 to 138; sequence KYERMQWQKLKEGETLTFMRLGDR. The interval 148-171 is W2 motif; the sequence is QLLRWVAQKKPVESVYDDLQVAGF. A W3 motif region spans residues 221 to 244; that stretch reads LFEKWAMEGTHIKSVITTLKLNGK. Positions 246 to 267 are y motif; sequence ASEMANNENFPALLKYVKLYLD.

Belongs to the RxLR effector family.

The protein resides in the secreted. It is found in the host cytoplasm. The protein localises to the host nucleus. Its subcellular location is the host nucleolus. It localises to the host cytoskeleton. Secreted effector that acts as an elicitor of hypersensitive response (HR) specifically on plants carrying defense protein R4, through its interaction with this protein. The protein is RxLR effector protein Avr4 of Phytophthora infestans (strain T30-4) (Potato late blight agent).